The primary structure comprises 153 residues: Natriuretic peptides A (153 aa).

Residues 1–25 form the signal peptide; that stretch reads MGSFSTITASFLLFLACQLLWQTGA. 2 propeptides span residues 26-123 and 93-103; these read NPVY…AAPR and DGGALGRGSWD. Positions 62–104 are disordered; that stretch reads VLSEQNEEAGAALSPLPEVPPWAGEVNPAQRDGGALGRGSWDS. Serine 129 carries the post-translational modification Phosphoserine. Cysteines 130 and 146 form a disulfide. Residues 147-151 are important for degradation of atrial natriuretic peptide by IDE; the sequence is NSFRY.

This sequence belongs to the natriuretic peptide family. As to quaternary structure, homodimer; disulfide-linked antiparallel dimer. In terms of processing, the precursor molecule is proteolytically cleaved by CORIN at Arg-123 to produce the atrial natriuretic peptide. Undergoes further proteolytic cleavage by unknown proteases to give rise to long-acting natriuretic peptide, vessel dilator and kaliuretic peptide. Additional processing gives rise to the auriculin and atriopeptin peptides. In the kidneys, alternative processing by an unknown protease results in the peptide urodilatin. Post-translationally, cleavage by MME initiates degradation of the factor and thereby regulates its activity. Degradation by IDE results in reduced activation of NPR1 (in vitro). During IDE degradation, the resulting products can temporarily stimulate NPR2 to produce cGMP, before the fragments are completely degraded and inactivated by IDE (in vitro). Degraded by IDE. In terms of processing, phosphorylation on Ser-129 decreases vasorelaxant activity.

The protein localises to the secreted. It localises to the perikaryon. The protein resides in the cell projection. Its function is as follows. Hormone that plays a key role in mediating cardio-renal homeostasis, and is involved in vascular remodeling and regulating energy metabolism. Acts by specifically binding and stimulating NPR1 to produce cGMP, which in turn activates effector proteins, such as PRKG1, that drive various biological responses. Regulates vasodilation, natriuresis, diuresis and aldosterone synthesis and is therefore essential for regulating blood pressure, controlling the extracellular fluid volume and maintaining the fluid-electrolyte balance. Also involved in inhibiting cardiac remodeling and cardiac hypertrophy by inducing cardiomyocyte apoptosis and attenuating the growth of cardiomyocytes and fibroblasts. Plays a role in female pregnancy by promoting trophoblast invasion and spiral artery remodeling in uterus, and thus prevents pregnancy-induced hypertension. In adipose tissue, acts in various cGMP- and PKG-dependent pathways to regulate lipid metabolism and energy homeostasis. This includes up-regulating lipid metabolism and mitochondrial oxygen utilization by activating the AMP-activated protein kinase (AMPK), and increasing energy expenditure by acting via MAPK11 to promote the UCP1-dependent thermogenesis of brown adipose tissue. Binds the clearance receptor NPR3 which removes the hormone from circulation. In terms of biological role, may have a role in cardio-renal homeostasis through regulation of natriuresis, diuresis, vasodilation, and inhibiting aldosterone synthesis. In vitro, promotes the production of cGMP and induces vasodilation. May promote natriuresis, at least in part, by enhancing prostaglandin E2 synthesis resulting in the inhibition of renal Na+-K+-ATPase. However reports on the involvement of this peptide in mammal blood volume and blood pressure homeostasis are conflicting; according to a report, in vivo it is not sufficient to activate cGMP and does not inhibit collecting duct transport nor effect diuresis and natriuresis. Appears to bind to specific receptors that are distinct from the receptors bound by atrial natriuretic peptide and vessel dilator. Possibly enhances protein excretion in urine by decreasing proximal tubular protein reabsorption. May have a role in cardio-renal homeostasis through regulation of natriuresis, diuresis, and vasodilation. In vitro, promotes the production of cGMP and induces vasodilation. May promote natriuresis, at least in part, by enhancing prostaglandin E2 synthesis resulting in the inhibition of renal Na+-K+-ATPase. However reports on the involvement of this peptide in mammal blood volume and blood pressure homeostasis are conflicting; according to a report it is not sufficient to activate cGMP and does not inhibit collecting duct transport nor effect diuresis and natriuresis. Appears to bind to specific receptors that are distinct from the receptors bound by the atrial natriuretic and long-acting natriuretic peptides. Possibly functions in protein excretion in urine by maintaining the integrity of the proximal tubules and enhancing protein excretion by decreasing proximal tubular protein reabsorption. Functionally, may have a role in cardio-renal homeostasis through regulation of diuresis and inhibiting aldosterone synthesis. In vitro, promotes the production of cGMP and induces vasodilation. May promote natriuresis, at least in part, by enhancing prostaglandin E2 synthesis resulting in the inhibition of renal Na+-K+-ATPase. May have a role in potassium excretion but not sodium excretion (natriuresis). Possibly enhances protein excretion in urine by decreasing proximal tubular protein reabsorption. Its function is as follows. Hormone produced in the kidneys that appears to be important for maintaining cardio-renal homeostasis. Mediates vasodilation, natriuresis and diuresis primarily in the renal system, in order to maintain the extracellular fluid volume and control the fluid-electrolyte balance. Specifically binds and stimulates cGMP production by renal transmembrane receptors, likely NPR1. Urodilatin not ANP, may be the natriuretic peptide responsible for the regulation of sodium and water homeostasis in the kidney. In terms of biological role, may have a role in cardio-renal homeostasis through regulation of natriuresis and vasodilation. In vivo promotes natriuresis and in vitro, vasodilates renal artery strips. May have a role in cardio-renal homeostasis through regulation of regulation of natriuresis and vasodilation. In vivo promotes natriuresis. In vitro, vasodilates intestinal smooth muscle but not smooth muscle strips. Functionally, may have a role in cardio-renal homeostasis through regulation of natriuresis and vasodilation. In vivo promotes natriuresis. In vitro, selectively vasodilates intestinal and vascular smooth muscle strips. Its function is as follows. May have a role in cardio-renal homeostasis through regulation of natriuresis and vasodilation. In vivo promotes natriuresis. In vitro, selectively vasodilates intestinal smooth muscle but not vascular smooth muscle strips. This Felis catus (Cat) protein is Natriuretic peptides A (NPPA).